The chain runs to 614 residues: DNA double-strand break repair protein Mre11 (614 aa).

Positions 12, 14, 53, and 88 each coordinate Mn(2+). His89 (proton donor) is an active-site residue. Positions 158, 189, and 191 each coordinate Mn(2+). Disordered stretches follow at residues 393 to 434 (ASPI…SPDI) and 487 to 614 (ALKK…GDYL). The segment covering 411–425 (PVSSADSVSAVSPES) has biased composition (low complexity). Composition is skewed to basic and acidic residues over residues 487 to 502 (ALKK…REAP), 535 to 558 (VPEK…KETG), and 568 to 591 (GSEK…EKPV).

This sequence belongs to the MRE11/RAD32 family. In terms of assembly, homodimer. Forms a heterotetramer composed of two Mre11 subunits and two Rad50 subunits. Mn(2+) is required as a cofactor.

Nuclease activity is regulated by Rad50. In terms of biological role, part of the Rad50/Mre11 complex, which is involved in the early steps of DNA double-strand break (DSB) repair. The complex may facilitate opening of the processed DNA ends to aid in the recruitment of HerA and NurA. Mre11 binds to DSB ends and has both double-stranded 3'-5' exonuclease activity and single-stranded endonuclease activity. In Methanosarcina acetivorans (strain ATCC 35395 / DSM 2834 / JCM 12185 / C2A), this protein is DNA double-strand break repair protein Mre11.